The primary structure comprises 553 residues: Putative transport protein CKO_00031 (553 aa).

5 helical membrane-spanning segments follow: residues Ile4–Ile24, Gly28–Asp48, Phe65–Ser85, Leu95–Phe115, and Met158–Met178. RCK C-terminal domains follow at residues Gln192–Gln276 and Asp279–Asn361. The next 6 helical transmembrane spans lie at Met371–Val391, Gly393–Leu413, Leu437–Thr457, Leu464–Leu484, Tyr493–Ala513, and Leu533–Gly553.

It belongs to the AAE transporter (TC 2.A.81) family. YidE subfamily.

It localises to the cell membrane. This chain is Putative transport protein CKO_00031, found in Citrobacter koseri (strain ATCC BAA-895 / CDC 4225-83 / SGSC4696).